An 84-amino-acid polypeptide reads, in one-letter code: Small ribosomal subunit protein bS16 (84 aa).

Belongs to the bacterial ribosomal protein bS16 family.

The protein is Small ribosomal subunit protein bS16 of Paraburkholderia phytofirmans (strain DSM 17436 / LMG 22146 / PsJN) (Burkholderia phytofirmans).